A 197-amino-acid chain; its full sequence is MASIQNLYETVVGVLGDQASKVISALGEITVECLPEHYISVMTALRDHEELHFELLVDLCGVDYSTYKNEVWQGKRFAVVSQLLSVKNNQRIRVRVWVSDDDFPVVESVVDIYNSADWYEREAFDMYGIMFNNHPDLRRILTDYGFVGHPFRKDFPISGYVEMRYDEEQKRVIYQPVTIEPREITPRIVREENYGGQ.

This sequence belongs to the complex I 30 kDa subunit family. In terms of assembly, NDH-1 is composed of 14 different subunits. Subunits NuoB, C, D, E, F, and G constitute the peripheral sector of the complex.

The protein localises to the cell inner membrane. The enzyme catalyses a quinone + NADH + 5 H(+)(in) = a quinol + NAD(+) + 4 H(+)(out). In terms of biological role, NDH-1 shuttles electrons from NADH, via FMN and iron-sulfur (Fe-S) centers, to quinones in the respiratory chain. The immediate electron acceptor for the enzyme in this species is believed to be ubiquinone. Couples the redox reaction to proton translocation (for every two electrons transferred, four hydrogen ions are translocated across the cytoplasmic membrane), and thus conserves the redox energy in a proton gradient. The chain is NADH-quinone oxidoreductase subunit C from Neisseria meningitidis serogroup A / serotype 4A (strain DSM 15465 / Z2491).